Here is a 670-residue protein sequence, read N- to C-terminus: DNA ligase (670 aa).

NAD(+) is bound by residues 36–40, 85–86, and Glu-116; these read DAQYD and SL. The active-site N6-AMP-lysine intermediate is Lys-118. 4 residues coordinate NAD(+): Arg-139, Glu-174, Lys-290, and Lys-314. Zn(2+) is bound by residues Cys-408, Cys-411, Cys-426, and Cys-431. One can recognise a BRCT domain in the interval 591–670; sequence STDQTLSGKT…QDFVKLLQQQ (80 aa).

Belongs to the NAD-dependent DNA ligase family. LigA subfamily. Mg(2+) is required as a cofactor. Mn(2+) serves as cofactor.

It carries out the reaction NAD(+) + (deoxyribonucleotide)n-3'-hydroxyl + 5'-phospho-(deoxyribonucleotide)m = (deoxyribonucleotide)n+m + AMP + beta-nicotinamide D-nucleotide.. Functionally, DNA ligase that catalyzes the formation of phosphodiester linkages between 5'-phosphoryl and 3'-hydroxyl groups in double-stranded DNA using NAD as a coenzyme and as the energy source for the reaction. It is essential for DNA replication and repair of damaged DNA. This chain is DNA ligase, found in Desulforamulus reducens (strain ATCC BAA-1160 / DSM 100696 / MI-1) (Desulfotomaculum reducens).